A 400-amino-acid chain; its full sequence is Spaetzle-processing enzyme (400 aa).

An N-terminal signal peptide occupies residues 1-27; that stretch reads MASTERNFLLLSLVVSALSGLVHRSDA. One can recognise a Clip domain in the interval 34 to 94; it reads SCTPQQSDER…GLVNRILVCC (61 aa). Intrachain disulfides connect Cys35-Cys93, Cys46-Cys77, Cys52-Cys94, Cys127-Cys269, Cys166-Cys182, and Cys211-Cys221. One can recognise a Peptidase S1 domain in the interval 135 to 399; that stretch reads IFGGTNTTLW…FIDWIKQKLE (265 aa). A glycan (N-linked (GlcNAc...) asparagine) is linked at Asn140. Residue His181 is the Charge relay system of the active site. Positions 202, 204, 207, and 210 each coordinate Ca(2+). The active-site Charge relay system is the Asp249. N-linked (GlcNAc...) asparagine glycosylation occurs at Asn311. 2 disulfides stabilise this stretch: Cys315–Cys332 and Cys342–Cys375. Ser346 functions as the Charge relay system in the catalytic mechanism.

This sequence belongs to the peptidase S1 family. CLIP subfamily. As to quaternary structure, in the active form, heterodimer of a light chain and a heavy chain; disulfide-linked. Post-translationally, proteolytically cleaved in response to Gram-negative bacterial or fungal infection; processing is likely to result in its activation. Cleavage produces a light chain containing the CLIP domain and a catalytic heavy chain which remain covalently associated through an interchain disulfide bond.

It is found in the secreted. Functionally, endopeptidase which plays a key role in innate immunity by cleaving Tl ligand spz and thereby activating the Toll pathway in response to fungal and Gram-positive bacterial infections. Acts downstream of pathogen recognition receptors PGRP-SA and GNBP1 and protease grass in response to Gram-positive bacterial infection. Acts downstream of protease psh in response to fungal infection. The chain is Spaetzle-processing enzyme from Drosophila melanogaster (Fruit fly).